The primary structure comprises 637 residues: MNPSPLLDLIDSPQDLRRLDKKQLPRLAGELRTFLLESVGQTGGHFASNLGAVELTVALHYVYNTPEDKLVWDVGHQSYPHKILTGRKNQMHTMRQYGGLAGFPKRCESEYDAFGVGHSSTSIGAALGMAAADKQLGSDRRSVAIIGDGAMTAGQAFEALNCAGDMDVDLLVVLNDNEMSISPNVGALPKYLASNVVRDMHGLLSTVKAQTGKVLDKIPGAMEFAQKVEHKIKTLAEEAEHAKQSLSLFENFGFRYTGPVDGHNVENLVDVLEDLRGRKGPQLLHVITKKGNGYKLAENDPVKYHAVANLPKESAAQMPSEKEPKPAAKPTYTQVFGKWLCDRAAADSRLVAITPAMREGSGLVEFEQRFPDRYFDVGIAEQHAVTFAGGLACEGMKPVVAIYSTFLQRAYDQLVHDIALQNLPVLFAVDRAGIVGADGPTHAGLYDLSFLRCIPNMIVAAPSDENECRLLLSTCYQADAPAAVRYPRGTGTGVPVSDGMETVEIGKGIIRREGEKTAFIAFGSMVAPALAVAGKLNATVADMRFVKPIDEELIVRLARSHDRIVTLEENAEQGGAGSAVLEVLAKHGICKPVLLLGVADTVTGHGDPKKLLDDLGLSAEAVERRVRAWLSDRDAAN.

Residues His-76 and 117–119 (GHS) contribute to the thiamine diphosphate site. Residue Asp-148 participates in Mg(2+) binding. Thiamine diphosphate contacts are provided by residues 149–150 (GA), Asn-177, Tyr-294, and Glu-381. Asn-177 provides a ligand contact to Mg(2+).

Belongs to the transketolase family. DXPS subfamily. Homodimer. Requires Mg(2+) as cofactor. Thiamine diphosphate serves as cofactor.

The catalysed reaction is D-glyceraldehyde 3-phosphate + pyruvate + H(+) = 1-deoxy-D-xylulose 5-phosphate + CO2. It participates in metabolic intermediate biosynthesis; 1-deoxy-D-xylulose 5-phosphate biosynthesis; 1-deoxy-D-xylulose 5-phosphate from D-glyceraldehyde 3-phosphate and pyruvate: step 1/1. Catalyzes the acyloin condensation reaction between C atoms 2 and 3 of pyruvate and glyceraldehyde 3-phosphate to yield 1-deoxy-D-xylulose-5-phosphate (DXP). In Neisseria meningitidis serogroup A / serotype 4A (strain DSM 15465 / Z2491), this protein is 1-deoxy-D-xylulose-5-phosphate synthase.